A 420-amino-acid polypeptide reads, in one-letter code: Glucose-1-phosphate adenylyltransferase (420 aa).

Alpha-D-glucose 1-phosphate contacts are provided by residues Tyr107, Gly173, Glu188–Lys189, and Ser206.

Belongs to the bacterial/plant glucose-1-phosphate adenylyltransferase family. Homotetramer.

It carries out the reaction alpha-D-glucose 1-phosphate + ATP + H(+) = ADP-alpha-D-glucose + diphosphate. Its pathway is glycan biosynthesis; glycogen biosynthesis. Functionally, involved in the biosynthesis of ADP-glucose, a building block required for the elongation reactions to produce glycogen. Catalyzes the reaction between ATP and alpha-D-glucose 1-phosphate (G1P) to produce pyrophosphate and ADP-Glc. In Shewanella oneidensis (strain ATCC 700550 / JCM 31522 / CIP 106686 / LMG 19005 / NCIMB 14063 / MR-1), this protein is Glucose-1-phosphate adenylyltransferase.